The sequence spans 629 residues: Dolichyl-diphosphooligosaccharide--protein glycosyltransferase subunit 2 (629 aa).

Residues 1-22 (MAPPGSRTVLLLALTIIARTQA) form the signal peptide. The Lumenal segment spans residues 23-541 (LKPTHYLTKH…RDPEKRPPTV (519 aa)). Asn106 is a glycosylation site (N-linked (GlcNAc...) asparagine). Residue Lys154 forms a Glycyl lysine isopeptide (Lys-Gly) (interchain with G-Cter in ubiquitin) linkage. A helical transmembrane segment spans residues 542–562 (VSNTFTGLILSPLLLLFALWI). Over 563 to 570 (RIGAKISN) the chain is Cytoplasmic. A helical transmembrane segment spans residues 571–591 (FTFGLTIIFHLGHAMLAMYVY). Over 592 to 594 (WTQ) the chain is Lumenal. A helical transmembrane segment spans residues 595-615 (LNMFQTLKYLAILGSVTFLAG). The Cytoplasmic portion of the chain corresponds to 616–629 (NRMLAQQAIKRTAH).

This sequence belongs to the SWP1 family. Component of the oligosaccharyltransferase (OST) complex. OST exists in two different complex forms which contain common core subunits RPN1, RPN2, OST48, OST4, DAD1 and TMEM258, either STT3A or STT3B as catalytic subunits, and form-specific accessory subunits. STT3A complex assembly occurs through the formation of 3 subcomplexes. Subcomplex 1 contains RPN1 and TMEM258, subcomplex 2 contains the STT3A-specific subunits STT3A, DC2/OSTC, and KCP2 as well as the core subunit OST4, and subcomplex 3 contains RPN2, DAD1, and OST48. The STT3A complex can form stable complexes with the Sec61 complex or with both the Sec61 and TRAP complexes. Interacts with DDI2. Interacts with TMEM35A/NACHO.

The protein resides in the endoplasmic reticulum. It is found in the endoplasmic reticulum membrane. The protein operates within protein modification; protein glycosylation. In terms of biological role, subunit of the oligosaccharyl transferase (OST) complex that catalyzes the initial transfer of a defined glycan (Glc(3)Man(9)GlcNAc(2) in eukaryotes) from the lipid carrier dolichol-pyrophosphate to an asparagine residue within an Asn-X-Ser/Thr consensus motif in nascent polypeptide chains, the first step in protein N-glycosylation. N-glycosylation occurs cotranslationally and the complex associates with the Sec61 complex at the channel-forming translocon complex that mediates protein translocation across the endoplasmic reticulum (ER). All subunits are required for a maximal enzyme activity. This is Dolichyl-diphosphooligosaccharide--protein glycosyltransferase subunit 2 from Sus scrofa (Pig).